Reading from the N-terminus, the 127-residue chain is Large ribosomal subunit protein bL17 (127 aa).

This sequence belongs to the bacterial ribosomal protein bL17 family. As to quaternary structure, part of the 50S ribosomal subunit. Contacts protein L32.

In Alcanivorax borkumensis (strain ATCC 700651 / DSM 11573 / NCIMB 13689 / SK2), this protein is Large ribosomal subunit protein bL17.